Here is a 267-residue protein sequence, read N- to C-terminus: DNA repair protein RecO (267 aa).

The protein belongs to the RecO family.

Its function is as follows. Involved in DNA repair and RecF pathway recombination. This is DNA repair protein RecO from Prochlorococcus marinus (strain MIT 9313).